The primary structure comprises 422 residues: 3-phosphoshikimate 1-carboxyvinyltransferase (422 aa).

Residues lysine 24, serine 25, and arginine 29 each coordinate 3-phosphoshikimate. Lysine 24 is a binding site for phosphoenolpyruvate. The phosphoenolpyruvate site is built by glycine 93 and arginine 121. Serine 164, serine 165, glutamine 166, glutamate 308, and histidine 335 together coordinate 3-phosphoshikimate. Phosphoenolpyruvate is bound at residue glutamine 166. Glutamate 308 acts as the Proton acceptor in catalysis. Residues arginine 339, arginine 380, and lysine 405 each coordinate phosphoenolpyruvate.

Belongs to the EPSP synthase family. In terms of assembly, monomer.

It is found in the cytoplasm. It catalyses the reaction 3-phosphoshikimate + phosphoenolpyruvate = 5-O-(1-carboxyvinyl)-3-phosphoshikimate + phosphate. It functions in the pathway metabolic intermediate biosynthesis; chorismate biosynthesis; chorismate from D-erythrose 4-phosphate and phosphoenolpyruvate: step 6/7. Functionally, catalyzes the transfer of the enolpyruvyl moiety of phosphoenolpyruvate (PEP) to the 5-hydroxyl of shikimate-3-phosphate (S3P) to produce enolpyruvyl shikimate-3-phosphate and inorganic phosphate. In Saccharopolyspora erythraea (strain ATCC 11635 / DSM 40517 / JCM 4748 / NBRC 13426 / NCIMB 8594 / NRRL 2338), this protein is 3-phosphoshikimate 1-carboxyvinyltransferase.